The following is a 444-amino-acid chain: NAD-capped RNA hydrolase NUDT12 (444 aa).

ANK repeat units lie at residues 11–40 and 60–80; these read EIIS…SLLN and SRQT…ANLL. N6-succinyllysine is present on lysine 167. Residues cysteine 266 and cysteine 269 each contribute to the Zn(2+) site. Lysine 274 bears the N6-succinyllysine mark. Positions 284 and 289 each coordinate Zn(2+). Substrate-binding positions include tyrosine 300, 336 to 338, glutamate 352, glutamate 356, and glutamate 397; that span reads AGF. In terms of domain architecture, Nudix hydrolase spans 301–435; sequence PRVDPVVIMQ…SRAIAHQLIK (135 aa). Residues alanine 336, glutamate 352, glutamate 356, and glutamate 397 each coordinate Mg(2+). The short motif at 337–358 is the Nudix box element; that stretch reads GFIEPGETIEDAVRREVEEESG. Residues 442–444 carry the Microbody targeting signal motif; it reads PNL.

It belongs to the Nudix hydrolase family. NudC subfamily. As to quaternary structure, homodimer. Homodimerization is essential for its catalytic activity and protein stability. Interacts (via ANK repeats) with BLMH. The cofactor is Mg(2+). Zn(2+) is required as a cofactor.

The protein localises to the cytoplasm. Its subcellular location is the peroxisome. It localises to the cytoplasmic granule. The enzyme catalyses a 5'-end NAD(+)-phospho-ribonucleoside in mRNA + H2O = a 5'-end phospho-adenosine-phospho-ribonucleoside in mRNA + beta-nicotinamide D-ribonucleotide + 2 H(+). The catalysed reaction is NAD(+) + H2O = beta-nicotinamide D-ribonucleotide + AMP + 2 H(+). It carries out the reaction NADH + H2O = reduced beta-nicotinamide D-ribonucleotide + AMP + 2 H(+). It catalyses the reaction NADPH + H2O = reduced beta-nicotinamide D-ribonucleotide + adenosine 2',5'-bisphosphate + 2 H(+). Functionally, mRNA decapping enzyme that specifically removes the nicotinamide adenine dinucleotide (NAD) cap from a subset of mRNAs by hydrolyzing the diphosphate linkage to produce nicotinamide mononucleotide (NMN) and 5' monophosphate mRNA. The NAD-cap is present at the 5'-end of some RNAs; in contrast to the canonical N7 methylguanosine (m7G) cap, the NAD cap promotes mRNA decay. Preferentially acts on NAD-capped transcripts in response to nutrient stress. Also acts on free nicotinamide adenine dinucleotide molecules: hydrolyzes NAD(H) into NMN(H) and AMP, and NADPH into NMNH and 2',5'-ADP. May act to regulate the concentration of peroxisomal nicotinamide nucleotide cofactors required for oxidative metabolism in this organelle. Regulates the levels of circadian clock components PER1, PER2, PER3 and CRY2 in the liver. This Bos taurus (Bovine) protein is NAD-capped RNA hydrolase NUDT12.